The sequence spans 89 residues: Small ribosomal subunit protein uS14A (89 aa).

The protein belongs to the universal ribosomal protein uS14 family. Part of the 30S ribosomal subunit. Contacts proteins S3 and S10.

Binds 16S rRNA, required for the assembly of 30S particles and may also be responsible for determining the conformation of the 16S rRNA at the A site. This chain is Small ribosomal subunit protein uS14A, found in Levilactobacillus brevis (strain ATCC 367 / BCRC 12310 / CIP 105137 / JCM 1170 / LMG 11437 / NCIMB 947 / NCTC 947) (Lactobacillus brevis).